A 209-amino-acid chain; its full sequence is Uridine kinase (209 aa).

Position 16–23 (16–23 (GGSGSGKT)) interacts with ATP.

The protein belongs to the uridine kinase family.

Its subcellular location is the cytoplasm. The catalysed reaction is uridine + ATP = UMP + ADP + H(+). The enzyme catalyses cytidine + ATP = CMP + ADP + H(+). Its pathway is pyrimidine metabolism; CTP biosynthesis via salvage pathway; CTP from cytidine: step 1/3. It participates in pyrimidine metabolism; UMP biosynthesis via salvage pathway; UMP from uridine: step 1/1. This chain is Uridine kinase, found in Lactiplantibacillus plantarum (strain ATCC BAA-793 / NCIMB 8826 / WCFS1) (Lactobacillus plantarum).